A 557-amino-acid chain; its full sequence is Formate--tetrahydrofolate ligase (557 aa).

66 to 73 (TPAGEGKS) is a binding site for ATP.

The protein belongs to the formate--tetrahydrofolate ligase family.

It carries out the reaction (6S)-5,6,7,8-tetrahydrofolate + formate + ATP = (6R)-10-formyltetrahydrofolate + ADP + phosphate. It functions in the pathway one-carbon metabolism; tetrahydrofolate interconversion. The sequence is that of Formate--tetrahydrofolate ligase from Clostridium botulinum (strain Loch Maree / Type A3).